The following is a 172-amino-acid chain: Type II secretion system protein H (172 aa).

A propeptide spans 1 to 6 (MRASRG) (leader sequence). Phenylalanine 7 bears the N-methylphenylalanine mark. A helical transmembrane segment spans residues 7 to 27 (FTLIELMVVMVIISVLIGLAV).

It belongs to the GSP H family. As to quaternary structure, type II secretion is composed of four main components: the outer membrane complex, the inner membrane complex, the cytoplasmic secretion ATPase and the periplasm-spanning pseudopilus. Forms the tip of the type II pseudopilus by interacting with XcpV, XcpW and XcpX. Interacts with core component XcpT. Post-translationally, cleaved by prepilin peptidase. In terms of processing, methylated by prepilin peptidase at the amino group of the N-terminal phenylalanine once the leader sequence is cleaved by prepilin peptidase.

It is found in the cell inner membrane. Its function is as follows. Component of the type II secretion system required for the energy-dependent secretion of extracellular factors such as proteases and toxins from the periplasm. Part of the pseudopilus tip complex that is critical for the recognition and binding of secretion substrates. Type II pseudopilus confers increased bacterial adhesive capabilities. This is Type II secretion system protein H (xcpU) from Pseudomonas aeruginosa (strain ATCC 15692 / DSM 22644 / CIP 104116 / JCM 14847 / LMG 12228 / 1C / PRS 101 / PAO1).